The following is an 866-amino-acid chain: Glycoprotein gp2 (866 aa).

An N-terminal signal peptide occupies residues 1 to 25; that stretch reads MGFIYARKLLLCMAVSIYAIGSTTT. 2 disordered regions span residues 24–185 and 319–619; these read TTTE…TDTT and TAAT…IVPQ. Asn-48 is a glycosylation site (N-linked (GlcNAc...) asparagine; by host). Residues 319–442 are compositionally biased toward low complexity; it reads TAATTTAATT…PDSSTGSTST (124 aa). Positions 443 to 463 are enriched in polar residues; the sequence is AEPSSTFTLTPSTATPSTDQF. 2 stretches are compositionally biased toward low complexity: residues 464 to 499 and 514 to 526; these read TGSS…EAST and TPDG…NTTP. Asn-518 is a glycosylation site (N-linked (GlcNAc...) asparagine; by host). A compositionally biased stretch (polar residues) spans 535–561; that stretch reads FADTQQTPDNGVSTQHTTINDHTTANA. The segment covering 564-574 has biased composition (basic residues); that stretch reads HAGHHRGRAGG. 2 N-linked (GlcNAc...) asparagine; by host glycosylation sites follow: Asn-611 and Asn-659. The helical transmembrane segment at 835-855 threads the bilayer; the sequence is FALVAATTLTVTILCLLCCLY.

The protein resides in the virion membrane. Functionally, virulence factor. The sequence is that of Glycoprotein gp2 from Equus caballus (Horse).